We begin with the raw amino-acid sequence, 172 residues long: Small ribosomal subunit protein uS5 (172 aa).

The 64-residue stretch at 17–80 folds into the S5 DRBM domain; that stretch reads LREKMISVNR…EQARRNMFKV (64 aa).

Belongs to the universal ribosomal protein uS5 family. Part of the 30S ribosomal subunit. Contacts proteins S4 and S8.

Its function is as follows. With S4 and S12 plays an important role in translational accuracy. Functionally, located at the back of the 30S subunit body where it stabilizes the conformation of the head with respect to the body. This is Small ribosomal subunit protein uS5 from Paraburkholderia phymatum (strain DSM 17167 / CIP 108236 / LMG 21445 / STM815) (Burkholderia phymatum).